The following is a 407-amino-acid chain: Digeranylgeranylglycerophospholipid reductase (407 aa).

The FAD site is built by Ala-15, Glu-34, Cys-45, Ala-46, Gly-48, Arg-99, Ala-123, Asp-281, Gly-293, and Ile-294.

It belongs to the geranylgeranyl reductase family. DGGGPL reductase subfamily. Requires FAD as cofactor.

The catalysed reaction is a 2,3-bis-O-phytanyl-sn-glycerol 1-phospholipid + 8 oxidized 2[4Fe-4S]-[ferredoxin] = a 2,3-bis-O-(geranylgeranyl)-sn-glycerol 1-phospholipid + 8 reduced 2[4Fe-4S]-[ferredoxin] + 16 H(+). It catalyses the reaction 2,3-bis-O-(phytanyl)-sn-glycerol 1-phosphate + 8 oxidized 2[4Fe-4S]-[ferredoxin] = 2,3-bis-O-(geranylgeranyl)-sn-glycerol 1-phosphate + 8 reduced 2[4Fe-4S]-[ferredoxin] + 16 H(+). The enzyme catalyses a 2,3-bis-O-phytanyl-sn-glycerol 1-phospholipid + 8 A = a 2,3-bis-O-(geranylgeranyl)-sn-glycerol 1-phospholipid + 8 AH2. It carries out the reaction CDP-2,3-bis-O-(geranylgeranyl)-sn-glycerol + 8 AH2 = CDP-2,3-bis-O-(phytanyl)-sn-glycerol + 8 A. The catalysed reaction is archaetidylserine + 8 AH2 = 2,3-bis-O-phytanyl-sn-glycero-3-phospho-L-serine + 8 A. Its pathway is membrane lipid metabolism; glycerophospholipid metabolism. In terms of biological role, is involved in the reduction of 2,3-digeranylgeranylglycerophospholipids (unsaturated archaeols) into 2,3-diphytanylglycerophospholipids (saturated archaeols) in the biosynthesis of archaeal membrane lipids. Catalyzes the formation of archaetidic acid (2,3-di-O-phytanyl-sn-glyceryl phosphate) from 2,3-di-O-geranylgeranylglyceryl phosphate (DGGGP) via the hydrogenation of each double bond of the isoprenoid chains. Is also probably able to reduce double bonds of geranyl groups in CDP-2,3-bis-O-(geranylgeranyl)-sn-glycerol and archaetidylserine, thus acting at various stages in the biosynthesis of archaeal membrane lipids. This Methanosarcina mazei (strain ATCC BAA-159 / DSM 3647 / Goe1 / Go1 / JCM 11833 / OCM 88) (Methanosarcina frisia) protein is Digeranylgeranylglycerophospholipid reductase.